The chain runs to 237 residues: Immunoglobulin superfamily member 6 (237 aa).

A signal peptide spans 1 to 27 (MGPVSARRSRLRPEISLILFQVGMVGA). Residues 28–152 (CTVYVLQPGY…ERLFSKEVRS (125 aa)) lie on the Extracellular side of the membrane. The Ig-like C2-type domain maps to 30 to 134 (VYVLQPGYLE…ELSPSAKHVG (105 aa)). C51 and C118 are disulfide-bonded. Residues 153–173 (FLIVLLALLSVYITGVCVTFI) form a helical membrane-spanning segment. The Cytoplasmic segment spans residues 174 to 237 (VLFKSKSNGP…RKALPNPGRA (64 aa)). A compositionally biased stretch (basic and acidic residues) spans 215 to 229 (TSHLPEQEGTDENRK). The tract at residues 215–237 (TSHLPEQEGTDENRKALPNPGRA) is disordered.

In terms of tissue distribution, ubiquitous with higher expression in immune tissue.

The protein localises to the membrane. This chain is Immunoglobulin superfamily member 6 (Igsf6), found in Mus musculus (Mouse).